Consider the following 855-residue polypeptide: Alanine--tRNA ligase (855 aa).

Residues H555, H559, C657, and H661 each coordinate Zn(2+).

This sequence belongs to the class-II aminoacyl-tRNA synthetase family. It depends on Zn(2+) as a cofactor.

Its subcellular location is the cytoplasm. It carries out the reaction tRNA(Ala) + L-alanine + ATP = L-alanyl-tRNA(Ala) + AMP + diphosphate. Functionally, catalyzes the attachment of alanine to tRNA(Ala) in a two-step reaction: alanine is first activated by ATP to form Ala-AMP and then transferred to the acceptor end of tRNA(Ala). Also edits incorrectly charged Ser-tRNA(Ala) and Gly-tRNA(Ala) via its editing domain. The protein is Alanine--tRNA ligase of Wolinella succinogenes (strain ATCC 29543 / DSM 1740 / CCUG 13145 / JCM 31913 / LMG 7466 / NCTC 11488 / FDC 602W) (Vibrio succinogenes).